Consider the following 519-residue polypeptide: ATP synthase subunit beta (519 aa).

Residues 1–26 (MAKAATPKRAPARAAAIPAAATPAAK) are compositionally biased toward low complexity. Residues 1–40 (MAKAATPKRAPARAAAIPAAATPAAKPAKRASTRSAAARS) are disordered. An ATP-binding site is contributed by 197–204 (GGAGVGKT).

This sequence belongs to the ATPase alpha/beta chains family. In terms of assembly, F-type ATPases have 2 components, CF(1) - the catalytic core - and CF(0) - the membrane proton channel. CF(1) has five subunits: alpha(3), beta(3), gamma(1), delta(1), epsilon(1). CF(0) has three main subunits: a(1), b(2) and c(9-12). The alpha and beta chains form an alternating ring which encloses part of the gamma chain. CF(1) is attached to CF(0) by a central stalk formed by the gamma and epsilon chains, while a peripheral stalk is formed by the delta and b chains.

The protein resides in the cell inner membrane. The enzyme catalyses ATP + H2O + 4 H(+)(in) = ADP + phosphate + 5 H(+)(out). In terms of biological role, produces ATP from ADP in the presence of a proton gradient across the membrane. The catalytic sites are hosted primarily by the beta subunits. This chain is ATP synthase subunit beta, found in Chelativorans sp. (strain BNC1).